A 235-amino-acid polypeptide reads, in one-letter code: Phosphoribosylaminoimidazole-succinocarboxamide synthase (235 aa).

Belongs to the SAICAR synthetase family.

The catalysed reaction is 5-amino-1-(5-phospho-D-ribosyl)imidazole-4-carboxylate + L-aspartate + ATP = (2S)-2-[5-amino-1-(5-phospho-beta-D-ribosyl)imidazole-4-carboxamido]succinate + ADP + phosphate + 2 H(+). Its pathway is purine metabolism; IMP biosynthesis via de novo pathway; 5-amino-1-(5-phospho-D-ribosyl)imidazole-4-carboxamide from 5-amino-1-(5-phospho-D-ribosyl)imidazole-4-carboxylate: step 1/2. The sequence is that of Phosphoribosylaminoimidazole-succinocarboxamide synthase from Clostridium perfringens (strain 13 / Type A).